The primary structure comprises 269 residues: Undecaprenyl-diphosphatase (269 aa).

A run of 7 helical transmembrane segments spans residues 41-61, 78-98, 107-127, 148-167, 184-204, 213-233, and 248-268; these read FATMFEIVIQLGAILAVVFHY, GFNLWFKIFIAFIPAAVIGLL, LFSPFTVAIALIAGAIMMIVI, SLLIGIAQVMSLFPGMSRSA, AEFSFFLAIPTMFAATTLSLL, LEWQALAVGFITSFLTALFVV, and FAYYRLAVGVLMILLVAEKIV.

The protein belongs to the UppP family.

Its subcellular location is the cell membrane. The enzyme catalyses di-trans,octa-cis-undecaprenyl diphosphate + H2O = di-trans,octa-cis-undecaprenyl phosphate + phosphate + H(+). Functionally, catalyzes the dephosphorylation of undecaprenyl diphosphate (UPP). Confers resistance to bacitracin. The protein is Undecaprenyl-diphosphatase of Thermoanaerobacter pseudethanolicus (strain ATCC 33223 / 39E) (Clostridium thermohydrosulfuricum).